Here is a 201-residue protein sequence, read N- to C-terminus: Recombination protein RecR (201 aa).

A C4-type zinc finger spans residues 57–72; the sequence is CADCRTFTEQPVCTIC. A Toprim domain is found at 81 to 176; it reads GQICVVESPA…MASRIAHGVP (96 aa).

The protein belongs to the RecR family.

Functionally, may play a role in DNA repair. It seems to be involved in an RecBC-independent recombinational process of DNA repair. It may act with RecF and RecO. This Sodalis glossinidius (strain morsitans) protein is Recombination protein RecR.